A 529-amino-acid chain; its full sequence is Bifunctional purine biosynthesis protein PurH (529 aa).

The 148-residue stretch at 1–148 (MNNARPIRRA…KNHKDTTIIV (148 aa)) folds into the MGS-like domain.

The protein belongs to the PurH family.

It carries out the reaction (6R)-10-formyltetrahydrofolate + 5-amino-1-(5-phospho-beta-D-ribosyl)imidazole-4-carboxamide = 5-formamido-1-(5-phospho-D-ribosyl)imidazole-4-carboxamide + (6S)-5,6,7,8-tetrahydrofolate. The catalysed reaction is IMP + H2O = 5-formamido-1-(5-phospho-D-ribosyl)imidazole-4-carboxamide. Its pathway is purine metabolism; IMP biosynthesis via de novo pathway; 5-formamido-1-(5-phospho-D-ribosyl)imidazole-4-carboxamide from 5-amino-1-(5-phospho-D-ribosyl)imidazole-4-carboxamide (10-formyl THF route): step 1/1. The protein operates within purine metabolism; IMP biosynthesis via de novo pathway; IMP from 5-formamido-1-(5-phospho-D-ribosyl)imidazole-4-carboxamide: step 1/1. The polypeptide is Bifunctional purine biosynthesis protein PurH (Shewanella halifaxensis (strain HAW-EB4)).